Consider the following 1045-residue polypeptide: Translation initiation factor IF-2 (1045 aa).

Disordered regions lie at residues 1–169 and 184–451; these read MSDE…AQAP and QAPA…RGGP. A compositionally biased stretch (gly residues) spans 83–94; sequence SGGGGSSAGGLS. Positions 103–123 are enriched in basic and acidic residues; that stretch reads RAIEAAREHQERQAAERRAAE. Low complexity predominate over residues 124 to 151; that stretch reads ARAASEAAAARDAAAKSAAAAKAAAAPA. Residues 152-163 are compositionally biased toward pro residues; sequence PEAPAAPAPTPA. Over residues 184 to 199 the composition is skewed to low complexity; that stretch reads QAPAAPVAAAPAAPRA. Composition is skewed to basic and acidic residues over residues 227-237 and 302-323; these read EPSRDRRDDRS and RNDRPQGDRPQGDRPQGDRPQG. Residues 338–348 are compositionally biased toward pro residues; the sequence is RPAPGARPGPG. Residues 352-363 show a composition bias toward low complexity; that stretch reads GARPGVPASAPA. Basic and acidic residues-rich tracts occupy residues 381–393 and 438–450; these read VGRKPEEDDDRRK and RAREREKEKRRGG. Positions 540 to 710 constitute a tr-type G domain; sequence PRPPVVTVMG…LLLAEVMDLK (171 aa). Residues 549–556 are G1; sequence GHVDHGKT. 549 to 556 is a GTP binding site; that stretch reads GHVDHGKT. The G2 stretch occupies residues 574–578; that stretch reads GITQH. Positions 596-599 are G3; that stretch reads DTPG. GTP is bound by residues 596–600 and 650–653; these read DTPGH and NKMD. The tract at residues 650-653 is G4; the sequence is NKMD. Positions 686-688 are G5; it reads SAK.

The protein belongs to the TRAFAC class translation factor GTPase superfamily. Classic translation factor GTPase family. IF-2 subfamily.

The protein resides in the cytoplasm. One of the essential components for the initiation of protein synthesis. Protects formylmethionyl-tRNA from spontaneous hydrolysis and promotes its binding to the 30S ribosomal subunits. Also involved in the hydrolysis of GTP during the formation of the 70S ribosomal complex. The chain is Translation initiation factor IF-2 from Caulobacter sp. (strain K31).